A 338-amino-acid polypeptide reads, in one-letter code: Taste receptor type 2 member 39 (338 aa).

Over 1-30 (MLGRCFPPNTKEKQQLRMIKLCDPAESELS) the chain is Extracellular. The helical transmembrane segment at 31-51 (PFLITLTLAVLLAEYLTGIIA) threads the bilayer. At 52–74 (NGFITAIHAAECVQNKSVSTSGR) the chain is on the cytoplasmic side. Residues 75–95 (ILVFLSVSRIALQSLMMLEIT) form a helical membrane-spanning segment. The Extracellular portion of the chain corresponds to 96-116 (ISSTSLSFYSEDTVYYAFKIS). The helical transmembrane segment at 117–137 (FIFLNFCSLWFAAWLSFFYFV) threads the bilayer. The Cytoplasmic segment spans residues 138-156 (KIANFSYPLFLKLRWRISG). The chain crosses the membrane as a helical span at residues 157-177 (LIPWLLWLSVFISFSHSMFCI). Over 178 to 205 (NICTGYCDNSFPIHSSNSTEKTYFSEIS) the chain is Extracellular. Asn194 carries N-linked (GlcNAc...) asparagine glycosylation. Residues 206 to 226 (VVSLAFFFNLGIVIPLIMFIL) form a helical membrane-spanning segment. Over 227–262 (AAILLILSLKRHTLYMXSNATGSKDPSMEAHIGAIK) the chain is Cytoplasmic. The chain crosses the membrane as a helical span at residues 263-283 (ATSYFLILYIFNAVALFIYLS). The Extracellular portion of the chain corresponds to 284-291 (NMFDINSL). Residues 292–312 (WNTLCQIIMAAYPASHSILLI) form a helical membrane-spanning segment. The Cytoplasmic portion of the chain corresponds to 313–338 (KDNPGLRRAWKQLQHRLHLYPKEWTL).

It belongs to the G-protein coupled receptor T2R family.

Its subcellular location is the membrane. Functionally, receptor that may play a role in the perception of bitterness and is gustducin-linked. May play a role in sensing the chemical composition of the gastrointestinal content. The activity of this receptor may stimulate alpha gustducin, mediate PLC-beta-2 activation and lead to the gating of TRPM5. This Papio hamadryas (Hamadryas baboon) protein is Taste receptor type 2 member 39 (TAS2R39).